We begin with the raw amino-acid sequence, 315 residues long: Peroxidase 1 (315 aa).

A signal peptide spans 1–21; it reads MASSSYTSLLVLVALVTAASA. Gln-22 is modified (pyrrolidone carboxylic acid). 4 disulfides stabilise this stretch: Cys-32–Cys-107, Cys-65–Cys-70, Cys-113–Cys-310, and Cys-193–Cys-219. Residue His-63 is the Proton acceptor of the active site. Positions 64, 67, 69, 71, and 73 each coordinate Ca(2+). Pro-155 contributes to the substrate binding site. Residue Asn-158 is glycosylated (N-linked (GlcNAc...) asparagine). Residue His-186 participates in heme b binding. Residue Thr-187 coordinates Ca(2+). Residues Asp-234, Thr-237, and Asp-242 each coordinate Ca(2+). Asn-265 carries an N-linked (GlcNAc...) asparagine glycan.

It belongs to the peroxidase family. Classical plant (class III) peroxidase subfamily. Requires Ca(2+) as cofactor. Heme b serves as cofactor.

The protein resides in the secreted. It catalyses the reaction 2 a phenolic donor + H2O2 = 2 a phenolic radical donor + 2 H2O. Functionally, removal of H(2)O(2), oxidation of toxic reductants, biosynthesis and degradation of lignin, suberization, auxin catabolism, response to environmental stresses such as wounding, pathogen attack and oxidative stress. These functions might be dependent on each isozyme/isoform in each plant tissue. Its function is as follows. Involved in defense response to powdery meldew fungus. This chain is Peroxidase 1, found in Hordeum vulgare (Barley).